The primary structure comprises 428 residues: Putative zinc metalloprotease SAS1196 (428 aa).

Position 21 (His-21) interacts with Zn(2+). Residue Glu-22 is part of the active site. Residue His-25 coordinates Zn(2+). The next 4 membrane-spanning stretches (helical) occupy residues 172–194 (FLTL…IGLA), 309–331 (GSTL…GFSF), 352–374 (IISL…LIPI), and 401–420 (TTII…LVTW). In terms of domain architecture, PDZ spans 186–269 (ALVLFIGLAY…TKSVELTPKK (84 aa)).

Belongs to the peptidase M50B family. It depends on Zn(2+) as a cofactor.

It is found in the cell membrane. In Staphylococcus aureus (strain MSSA476), this protein is Putative zinc metalloprotease SAS1196.